The primary structure comprises 150 residues: Transcriptional repressor NrdR (150 aa).

A zinc finger spans residues 3 to 34 (CPFCAHPDSKVVDSRPDKGGAAIRRRRECESC). Residues 49-139 (PLVLKKDGRR…VYRSFKDVNE (91 aa)) form the ATP-cone domain.

The protein belongs to the NrdR family. The cofactor is Zn(2+).

Functionally, negatively regulates transcription of bacterial ribonucleotide reductase nrd genes and operons by binding to NrdR-boxes. The protein is Transcriptional repressor NrdR of Geobacter metallireducens (strain ATCC 53774 / DSM 7210 / GS-15).